Reading from the N-terminus, the 256-residue chain is PHD finger protein ALFIN-LIKE 6 (256 aa).

Residues 144 to 200 (SKDLSVNNNNSKSKPSGVKSRQSESLSKVAKMSSPPPKEEEEEEDESEDESEDDEQG) are disordered. The segment covering 146–163 (DLSVNNNNSKSKPSGVKS) has biased composition (low complexity). A compositionally biased stretch (acidic residues) spans 182 to 199 (EEEEEEDESEDESEDDEQ). Residues 200–252 (GAVCGACGDNYGTDEFWICCDACEKWFHGKCVKITPAKAEHIKHYKCPTCSNK) form a PHD-type zinc finger.

Belongs to the Alfin family. Interacts with H3K4me3 and to a lesser extent with H3K4me2. As to expression, ubiquitously expressed.

The protein resides in the nucleus. Its function is as follows. Histone-binding component that specifically recognizes H3 tails trimethylated on 'Lys-4' (H3K4me3), which mark transcription start sites of virtually all active genes. This chain is PHD finger protein ALFIN-LIKE 6 (AL6), found in Arabidopsis thaliana (Mouse-ear cress).